Here is a 336-residue protein sequence, read N- to C-terminus: Cell division protein ZipA (336 aa).

Residues methionine 1 to glutamate 2 lie on the Periplasmic side of the membrane. A helical membrane pass occupies residues leucine 3–leucine 23. At tryptophan 24–serine 336 the chain is on the cytoplasmic side. Residues serine 57–aspartate 76 form a disordered region. Residues asparagine 59–histidine 70 are compositionally biased toward polar residues.

This sequence belongs to the ZipA family. Interacts with FtsZ via their C-terminal domains.

It is found in the cell inner membrane. In terms of biological role, essential cell division protein that stabilizes the FtsZ protofilaments by cross-linking them and that serves as a cytoplasmic membrane anchor for the Z ring. Also required for the recruitment to the septal ring of downstream cell division proteins. In Actinobacillus pleuropneumoniae serotype 7 (strain AP76), this protein is Cell division protein ZipA.